The following is a 490-amino-acid chain: Betaine aldehyde dehydrogenase (490 aa).

Asp-93 is a K(+) binding site. Residue 150–152 (GAW) coordinates NAD(+). Lys-162 (charge relay system) is an active-site residue. 176–179 (KPSE) serves as a coordination point for NAD(+). Val-180 lines the K(+) pocket. 230 to 233 (GVKT) contacts NAD(+). Leu-246 is a binding site for K(+). The active-site Proton acceptor is Glu-252. The NAD(+) site is built by Gly-254, Cys-286, and Glu-387. Residue Cys-286 is the Nucleophile of the active site. Residue Cys-286 is modified to Cysteine sulfenic acid (-SOH). Residues Lys-457 and Gly-460 each coordinate K(+). Glu-464 functions as the Charge relay system in the catalytic mechanism.

It belongs to the aldehyde dehydrogenase family. As to quaternary structure, dimer of dimers. K(+) serves as cofactor.

The enzyme catalyses betaine aldehyde + NAD(+) + H2O = glycine betaine + NADH + 2 H(+). Its pathway is amine and polyamine biosynthesis; betaine biosynthesis via choline pathway; betaine from betaine aldehyde: step 1/1. Functionally, involved in the biosynthesis of the osmoprotectant glycine betaine. Catalyzes the irreversible oxidation of betaine aldehyde to the corresponding acid. The chain is Betaine aldehyde dehydrogenase from Serratia proteamaculans (strain 568).